Consider the following 453-residue polypeptide: Tubulin beta-1 chain (453 aa).

Positions 12, 71, 140, 144, 145, 146, 206, and 228 each coordinate GTP. E71 provides a ligand contact to Mg(2+). Residues T431–E453 form a disordered region. Over residues E436–E453 the composition is skewed to acidic residues.

Belongs to the tubulin family. Dimer of alpha and beta chains. A typical microtubule is a hollow water-filled tube with an outer diameter of 25 nm and an inner diameter of 15 nM. Alpha-beta heterodimers associate head-to-tail to form protofilaments running lengthwise along the microtubule wall with the beta-tubulin subunit facing the microtubule plus end conferring a structural polarity. Microtubules usually have 13 protofilaments but different protofilament numbers can be found in some organisms and specialized cells. Requires Mg(2+) as cofactor.

Its subcellular location is the cytoplasm. The protein localises to the cytoskeleton. Tubulin is the major constituent of microtubules, a cylinder consisting of laterally associated linear protofilaments composed of alpha- and beta-tubulin heterodimers. Microtubules grow by the addition of GTP-tubulin dimers to the microtubule end, where a stabilizing cap forms. Below the cap, tubulin dimers are in GDP-bound state, owing to GTPase activity of alpha-tubulin. This is Tubulin beta-1 chain (TUBB) from Chondrus crispus (Carrageen Irish moss).